Here is a 117-residue protein sequence, read N- to C-terminus: 3',5'-cyclic-AMP phosphodiesterase 4A (117 aa).

A disordered region spans residues K42–P79. The segment covering M53–R63 has biased composition (basic and acidic residues). Residues Q78–L117 are catalytic.

It belongs to the cyclic nucleotide phosphodiesterase family. PDE4 subfamily. As to quaternary structure, interacts with LYN (via SH3 domain). Interacts with ARRB2. It depends on Zn(2+) as a cofactor. Requires Mg(2+) as cofactor. The cofactor is Mn(2+). In terms of processing, proteolytically cleaved by CASP3.

The protein resides in the cytoplasm. Its subcellular location is the cytosol. It localises to the membrane. The enzyme catalyses 3',5'-cyclic AMP + H2O = AMP + H(+). It participates in purine metabolism; 3',5'-cyclic AMP degradation; AMP from 3',5'-cyclic AMP: step 1/1. In terms of biological role, hydrolyzes the second messenger 3',5'-cyclic AMP (cAMP), which is a key regulator of many important physiological processes. The polypeptide is 3',5'-cyclic-AMP phosphodiesterase 4A (PDE4A) (Cavia porcellus (Guinea pig)).